Here is a 125-residue protein sequence, read N- to C-terminus: Interferon-induced transmembrane protein 1 (125 aa).

The Cytoplasmic segment spans residues 1-36; sequence MHKEEHEVAVLGPPPSTILPRSTVINIHSETSVPDH. Position 16 is a phosphoserine (serine 16). The helical intramembrane region spans 37-57; it reads VVWSLFNTLFLNWCCLGFIAF. S-palmitoyl cysteine attachment occurs at residues cysteine 50, cysteine 51, and cysteine 84. Topologically, residues 58–86 are cytoplasmic; the sequence is AYSVKSRDRKMVGDVTGAQAYASTAKCLN. An interaction with CAV1 region spans residues 84–125; the sequence is CLNIWALILGILMTIGFILLLVFGSVTVYHIMLQIIQEKRGY. A helical transmembrane segment spans residues 87–107; sequence IWALILGILMTIGFILLLVFG. Topologically, residues 108-125 are extracellular; sequence SVTVYHIMLQIIQEKRGY.

This sequence belongs to the CD225/Dispanin family. Interacts with CD81. Part of a complex composed of CD19, CR2/CD21, CD81 and IFITM1/CD225 in the membrane of mature B-cells. Interacts with CAV1; this interaction enhances the ability of CAV1 in inhibiting ERK activation. Palmitoylation on membrane-proximal cysteines controls clustering in membrane compartments and antiviral activity. Bone (at protein level). Levels greatly elevated in colon cancer, cervical cancer, esophageal cancer and ovarian cancer. Expressed in glioma cell lines.

It is found in the cell membrane. The protein resides in the lysosome membrane. In terms of biological role, IFN-induced antiviral protein which inhibits the entry of viruses to the host cell cytoplasm, permitting endocytosis, but preventing subsequent viral fusion and release of viral contents into the cytosol. Active against multiple viruses, including influenza A virus, SARS coronaviruses (SARS-CoV and SARS-CoV-2), Marburg virus (MARV), Ebola virus (EBOV), Dengue virus (DNV), West Nile virus (WNV), human immunodeficiency virus type 1 (HIV-1) and hepatitis C virus (HCV). Can inhibit: influenza virus hemagglutinin protein-mediated viral entry, MARV and EBOV GP1,2-mediated viral entry and SARS-CoV and SARS-CoV-2 S protein-mediated viral entry. Also implicated in cell adhesion and control of cell growth and migration. Inhibits SARS-CoV-2 S protein-mediated syncytia formation. Plays a key role in the antiproliferative action of IFN-gamma either by inhibiting the ERK activation or by arresting cell growth in G1 phase in a p53-dependent manner. Acts as a positive regulator of osteoblast differentiation. In hepatocytes, IFITM proteins act in a coordinated manner to restrict HCV infection by targeting the endocytosed HCV virion for lysosomal degradation. IFITM2 and IFITM3 display anti-HCV activity that may complement the anti-HCV activity of IFITM1 by inhibiting the late stages of HCV entry, possibly in a coordinated manner by trapping the virion in the endosomal pathway and targeting it for degradation at the lysosome. The chain is Interferon-induced transmembrane protein 1 from Homo sapiens (Human).